The sequence spans 160 residues: Putative antiporter subunit mnhE2 (160 aa).

Transmembrane regions (helical) follow at residues 22–42, 55–75, and 100–120; these read HFKF…IYIL, IWVA…SSIS, and SDWA…STVI.

This sequence belongs to the CPA3 antiporters (TC 2.A.63) subunit E family. May form a heterooligomeric complex that consists of seven subunits: mnhA2, mnhB2, mnhC2, mnhD2, mnhE2, mnhF2 and mnhG2.

It is found in the cell membrane. The chain is Putative antiporter subunit mnhE2 (mnhE2) from Staphylococcus aureus (strain Mu3 / ATCC 700698).